Here is a 259-residue protein sequence, read N- to C-terminus: NAP1-related protein 1 (259 aa).

The segment covering 1–15 (MAAAEQKGKKPRTDG) has biased composition (basic and acidic residues). The tract at residues 1–20 (MAAAEQKGKKPRTDGAEAEP) is disordered. A coiled-coil region spans residues 21-62 (VDAALLQSIEKLQEIQDEIEKVNEEACDKVLELEQKYNEVRR). The tract at residues 228 to 259 (ELLDDDDEVSDDDDEEEDDEDQGEGEEDGEEN) is disordered.

This sequence belongs to the nucleosome assembly protein (NAP) family.

It localises to the nucleus. Its subcellular location is the cytoplasm. Acts as a histone H2A/H2B chaperone in nucleosome assembly. This chain is NAP1-related protein 1, found in Oryza sativa subsp. indica (Rice).